A 231-amino-acid chain; its full sequence is Large ribosomal subunit protein uL1 (231 aa).

Belongs to the universal ribosomal protein uL1 family. As to quaternary structure, part of the 50S ribosomal subunit.

In terms of biological role, binds directly to 23S rRNA. The L1 stalk is quite mobile in the ribosome, and is involved in E site tRNA release. Its function is as follows. Protein L1 is also a translational repressor protein, it controls the translation of the L11 operon by binding to its mRNA. This chain is Large ribosomal subunit protein uL1, found in Cellvibrio japonicus (strain Ueda107) (Pseudomonas fluorescens subsp. cellulosa).